The chain runs to 155 residues: MSKTNKRKIEKARIEAKILGFLESGRKEITSKKQLEKYAIGSLISYKNTNDEFKQGGFITKFADEYFIYITPDFTTKYRVKYKNVKTMWVGNVYKTKNDLVSLVETPQEPTNFEVTLNGITIYYAKNSFDVRRYKSTEKYKRMNAWCDYFKNPKK.

This sequence belongs to the mimivirus L6/L7/L57 family.

This is an uncharacterized protein from Acanthamoeba polyphaga (Amoeba).